A 750-amino-acid chain; its full sequence is Photosystem I P700 chlorophyll a apoprotein A1 (750 aa).

8 helical membrane-spanning segments follow: residues 70 to 93, 156 to 179, 195 to 219, 291 to 309, 346 to 369, 385 to 411, 433 to 455, and 531 to 549; these read VFSAHFGQLSIIFLWLSGMYFHGA, LYCTAIGALIFAALMLFAGWFHYH, LNHHLAGLLGLGSLSWAGHQVHVSL, IAHHHLAIAILFLIAGHMY, WHAQLSLNLAMLGSLTIIVAHHMY, LSLFTHHMWIGGFLIVGAAAHAAIFMV, AIISHLNWVCIFLGFHSFGLYIH, and FLVHHIHAFTIHVTVLILL. [4Fe-4S] cluster contacts are provided by Cys-573 and Cys-582. 2 helical membrane-spanning segments follow: residues 589 to 610 and 664 to 686; these read HVFLGLFWMYNAISVVIFHFSW and LSAYGLFFLGAHFVWAFSLMFLF. His-675 serves as a coordination point for chlorophyll a'. 2 residues coordinate chlorophyll a: Met-683 and Tyr-691. Position 692 (Trp-692) interacts with phylloquinone. A helical membrane pass occupies residues 724–744; it reads AVGVTHYLLGGIATTWAFFLA.

This sequence belongs to the PsaA/PsaB family. As to quaternary structure, the PsaA/B heterodimer binds the P700 chlorophyll special pair and subsequent electron acceptors. PSI consists of a core antenna complex that captures photons, and an electron transfer chain that converts photonic excitation into a charge separation. The eukaryotic PSI reaction center is composed of at least 11 subunits. The cofactor is P700 is a chlorophyll a/chlorophyll a' dimer, A0 is one or more chlorophyll a, A1 is one or both phylloquinones and FX is a shared 4Fe-4S iron-sulfur center..

The protein localises to the plastid. It is found in the chloroplast thylakoid membrane. It catalyses the reaction reduced [plastocyanin] + hnu + oxidized [2Fe-2S]-[ferredoxin] = oxidized [plastocyanin] + reduced [2Fe-2S]-[ferredoxin]. In terms of biological role, psaA and PsaB bind P700, the primary electron donor of photosystem I (PSI), as well as the electron acceptors A0, A1 and FX. PSI is a plastocyanin-ferredoxin oxidoreductase, converting photonic excitation into a charge separation, which transfers an electron from the donor P700 chlorophyll pair to the spectroscopically characterized acceptors A0, A1, FX, FA and FB in turn. Oxidized P700 is reduced on the lumenal side of the thylakoid membrane by plastocyanin. This Citrus sinensis (Sweet orange) protein is Photosystem I P700 chlorophyll a apoprotein A1.